The following is a 301-amino-acid chain: Sulfate adenylyltransferase subunit 2 (301 aa).

The disordered stretch occupies residues arginine 279–phenylalanine 301.

Belongs to the PAPS reductase family. CysD subfamily. As to quaternary structure, heterodimer composed of CysD, the smaller subunit, and CysN.

The catalysed reaction is sulfate + ATP + H(+) = adenosine 5'-phosphosulfate + diphosphate. It participates in sulfur metabolism; hydrogen sulfide biosynthesis; sulfite from sulfate: step 1/3. Its function is as follows. With CysN forms the ATP sulfurylase (ATPS) that catalyzes the adenylation of sulfate producing adenosine 5'-phosphosulfate (APS) and diphosphate, the first enzymatic step in sulfur assimilation pathway. APS synthesis involves the formation of a high-energy phosphoric-sulfuric acid anhydride bond driven by GTP hydrolysis by CysN coupled to ATP hydrolysis by CysD. The chain is Sulfate adenylyltransferase subunit 2 from Geotalea uraniireducens (strain Rf4) (Geobacter uraniireducens).